The chain runs to 193 residues: Peptide deformylase 2 (193 aa).

Fe cation is bound by residues C100 and H142. E143 is a catalytic residue. H146 is a Fe cation binding site.

It belongs to the polypeptide deformylase family. Fe(2+) serves as cofactor.

The catalysed reaction is N-terminal N-formyl-L-methionyl-[peptide] + H2O = N-terminal L-methionyl-[peptide] + formate. In terms of biological role, removes the formyl group from the N-terminal Met of newly synthesized proteins. Requires at least a dipeptide for an efficient rate of reaction. N-terminal L-methionine is a prerequisite for activity but the enzyme has broad specificity at other positions. This chain is Peptide deformylase 2, found in Corynebacterium efficiens (strain DSM 44549 / YS-314 / AJ 12310 / JCM 11189 / NBRC 100395).